The primary structure comprises 807 residues: Ribosome biogenesis protein ERB1 (807 aa).

The segment at 1-112 (MMAKNNKTTE…DTTSLTDRLS (112 aa)) is disordered. 2 stretches are compositionally biased toward acidic residues: residues 21 to 30 (EESDVEEDED) and 42 to 56 (EASE…YESA). Ser-23 is modified (phosphoserine). The span at 57 to 69 (VEEKESSSDKEAQ) shows a compositional bias: basic and acidic residues. Phosphoserine occurs at positions 72 and 76. Residues 86-102 (EEEGDEEEDYDSSEFSD) are compositionally biased toward acidic residues. Residue Lys-127 forms a Glycyl lysine isopeptide (Lys-Gly) (interchain with G-Cter in ubiquitin) linkage. Ser-146 and Ser-149 each carry phosphoserine. Residues 265 to 383 (RFVPSKNEAK…LRKVPGYGES (119 aa)) are required for interaction with NOP7. Positions 383-419 (SIRERFERSLDLYLAPRVRKNKLNIDPNSLIPELPSP) are required for interaction with YTM1. Ser-418 bears the Phosphoserine mark. WD repeat units follow at residues 435–474 (GHKG…EVYR), 483–523 (NPDD…YDIE), 592–634 (SCKK…TQSP), 637–675 (KSKG…LVKK), 678–717 (PGAR…TPYK), 721–760 (YHEK…DMMK), and 776–807 (INSL…LWTT).

It belongs to the WD repeat BOP1/ERB1 family. As to quaternary structure, component of the NOP7 complex, composed of ERB1, NOP7 and YTM1. The complex is held together by ERB1, which interacts with NOP7 via its N-terminal domain and with YTM1 via a high-affinity interaction between the seven-bladed beta-propeller domains of the 2 proteins. The NOP7 complex associates with the 66S pre-ribosome.

Its subcellular location is the nucleus. It is found in the nucleolus. The protein resides in the nucleoplasm. In terms of biological role, component of the NOP7 complex, which is required for maturation of the 25S and 5.8S ribosomal RNAs and formation of the 60S ribosome. The sequence is that of Ribosome biogenesis protein ERB1 from Saccharomyces cerevisiae (strain YJM789) (Baker's yeast).